A 272-amino-acid polypeptide reads, in one-letter code: HTH-type transcriptional repressor AllR (272 aa).

The tract at residues 1-20 (MTEVRRRGRPGQAEPTAQKG) is disordered. The 63-residue stretch at 21-83 (AQALERGIAI…SQLGWWHIGL (63 aa)) folds into the HTH iclR-type domain. Positions 43–62 (VSDISGSLDLPLSTTFRLLK) form a DNA-binding region, H-T-H motif. Residues 98-267 (VLSVAGPFMH…AKDISTALGL (170 aa)) enclose the IclR-ED domain. Residues 154 to 156 (SGA), Asp-207, Cys-217, and 234 to 236 (SIS) contribute to the glyoxylate site.

Its function is as follows. Negative regulator of allantoin and glyoxylate utilization operons. Binds to the gcl promoter and to the allS-allA intergenic region. The polypeptide is HTH-type transcriptional repressor AllR (allR) (Salmonella paratyphi A (strain ATCC 9150 / SARB42)).